We begin with the raw amino-acid sequence, 695 residues long: Elongation factor G (695 aa).

The tr-type G domain maps to 8 to 282; sequence KDTRNIGIMA…AIVDYMPAPI (275 aa). Residues 17-24, 81-85, and 135-138 contribute to the GTP site; these read AHIDAGKT, DTPGH, and NKMD. Residues 285 to 304 are disordered; that stretch reads PDIKGVDPQTDEPTTRKSSD.

It belongs to the TRAFAC class translation factor GTPase superfamily. Classic translation factor GTPase family. EF-G/EF-2 subfamily.

It localises to the cytoplasm. Functionally, catalyzes the GTP-dependent ribosomal translocation step during translation elongation. During this step, the ribosome changes from the pre-translocational (PRE) to the post-translocational (POST) state as the newly formed A-site-bound peptidyl-tRNA and P-site-bound deacylated tRNA move to the P and E sites, respectively. Catalyzes the coordinated movement of the two tRNA molecules, the mRNA and conformational changes in the ribosome. The sequence is that of Elongation factor G from Finegoldia magna (strain ATCC 29328 / DSM 20472 / WAL 2508) (Peptostreptococcus magnus).